The chain runs to 351 residues: DNA integrity scanning protein DisA (351 aa).

The DAC domain occupies arginine 4–phenylalanine 142. ATP contacts are provided by residues glycine 71, leucine 89, and threonine 102 to threonine 106.

It belongs to the DisA family. In terms of assembly, homooctamer. It depends on Mg(2+) as a cofactor.

It carries out the reaction 2 ATP = 3',3'-c-di-AMP + 2 diphosphate. In terms of biological role, participates in a DNA-damage check-point that is active prior to asymmetric division when DNA is damaged. DisA forms globular foci that rapidly scan along the chromosomes during sporulation, searching for lesions. When a lesion is present, DisA pauses at the lesion site. This triggers a cellular response that culminates in a temporary block in sporulation initiation. Functionally, also has diadenylate cyclase activity, catalyzing the condensation of 2 ATP molecules into cyclic di-AMP (c-di-AMP). c-di-AMP acts as a signaling molecule that couples DNA integrity with progression of sporulation. The rise in c-di-AMP level generated by DisA while scanning the chromosome, operates as a positive signal that advances sporulation; upon encountering a lesion, the DisA focus arrests at the damaged site and halts c-di-AMP synthesis. In Symbiobacterium thermophilum (strain DSM 24528 / JCM 14929 / IAM 14863 / T), this protein is DNA integrity scanning protein DisA.